A 227-amino-acid chain; its full sequence is ATP synthase F(0) complex subunit a (227 aa).

6 helical membrane passes run 14–34 (LLGH…FPSP), 69–89 (WALM…LGLL), 98–118 (QLSM…LTGL), 139–159 (IPAL…ALGV), 167–187 (AGHL…PILP), and 190–210 (SILT…VAMI).

This sequence belongs to the ATPase A chain family. In terms of assembly, component of the ATP synthase complex composed at least of ATP5F1A/subunit alpha, ATP5F1B/subunit beta, ATP5MC1/subunit c (homooctomer), MT-ATP6/subunit a, MT-ATP8/subunit 8, ATP5ME/subunit e, ATP5MF/subunit f, ATP5MG/subunit g, ATP5MK/subunit k, ATP5MJ/subunit j, ATP5F1C/subunit gamma, ATP5F1D/subunit delta, ATP5F1E/subunit epsilon, ATP5PF/subunit F6, ATP5PB/subunit b, ATP5PD/subunit d, ATP5PO/subunit OSCP. ATP synthase complex consists of a soluble F(1) head domain (subunits alpha(3) and beta(3)) - the catalytic core - and a membrane F(0) domain - the membrane proton channel (subunits c, a, 8, e, f, g, k and j). These two domains are linked by a central stalk (subunits gamma, delta, and epsilon) rotating inside the F1 region and a stationary peripheral stalk (subunits F6, b, d, and OSCP). Interacts with DNAJC30; interaction is direct.

The protein localises to the mitochondrion inner membrane. It carries out the reaction H(+)(in) = H(+)(out). Functionally, subunit a, of the mitochondrial membrane ATP synthase complex (F(1)F(0) ATP synthase or Complex V) that produces ATP from ADP in the presence of a proton gradient across the membrane which is generated by electron transport complexes of the respiratory chain. ATP synthase complex consist of a soluble F(1) head domain - the catalytic core - and a membrane F(1) domain - the membrane proton channel. These two domains are linked by a central stalk rotating inside the F(1) region and a stationary peripheral stalk. During catalysis, ATP synthesis in the catalytic domain of F(1) is coupled via a rotary mechanism of the central stalk subunits to proton translocation. With the subunit c (ATP5MC1), forms the proton-conducting channel in the F(0) domain, that contains two crucial half-channels (inlet and outlet) that facilitate proton movement from the mitochondrial intermembrane space (IMS) into the matrix. Protons are taken up via the inlet half-channel and released through the outlet half-channel, following a Grotthuss mechanism. The sequence is that of ATP synthase F(0) complex subunit a from Anas platyrhynchos (Mallard).